A 420-amino-acid polypeptide reads, in one-letter code: MALYCGDNFGVYSQPGLPPPAATAAAPGAPPAARAPYGLADYAAPPAAAANPYLWLNGPGVGGPPSAAAAAAAAYLGAPPPPPPPGAAAGPFLQPPPAAGTFGCSQRPFAQPAPAAPASPAAPAGPGELGWLSMASREDLMKMVRPPYSYSALIAMAIQSAPERKLTLSHIYQFVADSFPFYQRSKAGWQNSIRHNLSLNDCFKKVPRDEDDPGKGNYWTLDPNCEKMFDNGNFRRKRKRRSEASNGSTVAAGTSKSEEGLSSGLGSGVGGKPEEESPSTLLRPSHSPEPPEGTKSTASSPGGPMLTSTPCLNTFFSSLSSLSVSSSVSTQRALPGSRHLGIQGAQLPSSGVFSPTSISEASADTLQLSNSTSNSTGQRSSYYSPFPASTSGGQSSPFSSPFHNFSMVNSLIYPREGSEV.

Disordered stretches follow at residues 103-122 (GCSQ…SPAA), 234-306 (FRRK…GPML), and 364-396 (DTLQ…GQSS). Positions 108–122 (PFAQPAPAAPASPAA) are enriched in low complexity. Position 119 is a phosphoserine (Ser119). Residues 145-239 (RPPYSYSALI…DNGNFRRKRK (95 aa)) constitute a DNA-binding region (fork-head). Residues 235 to 241 (RRKRKRR) carry the Nuclear localization signal motif. Phosphoserine occurs at positions 277, 285, and 287. Polar residues predominate over residues 294–306 (TKSTASSPGGPML). The short motif at 406–414 (SMVNSLIYP) is the 9aaTAD element.

In terms of processing, phosphorylation promotes the transcription factor activity. Dephosphorylation by protein phosphatase 2A (PP2A) reduces its activity.

It is found in the nucleus. Transcription factor required for pharyngeal arch development, which is involved in hair, ear, jaw and dental development. May act as a pioneer transcription factor during pharyngeal arch development. Required for epithelial cell differentiation within the epidermis. Acts at multiple stages of otic placode induction: necessary for preplacodal ectoderm to execute an inner ear program. Required for hair follicle stem cell specification. Acts downstream of TBX1 for the formation of the thymus and parathyroid glands from the third pharyngeal pouch. The chain is Forkhead box protein I3 from Homo sapiens (Human).